The chain runs to 116 residues: DNA-directed RNA polymerase subunit omega (116 aa).

Belongs to the RNA polymerase subunit omega family. In terms of assembly, the RNAP catalytic core consists of 2 alpha, 1 beta, 1 beta' and 1 omega subunit. When a sigma factor is associated with the core the holoenzyme is formed, which can initiate transcription.

The enzyme catalyses RNA(n) + a ribonucleoside 5'-triphosphate = RNA(n+1) + diphosphate. Promotes RNA polymerase assembly. Latches the N- and C-terminal regions of the beta' subunit thereby facilitating its interaction with the beta and alpha subunits. The polypeptide is DNA-directed RNA polymerase subunit omega (Hyphomonas neptunium (strain ATCC 15444)).